We begin with the raw amino-acid sequence, 215 residues long: Elongation factor Ts (215 aa).

The involved in Mg(2+) ion dislocation from EF-Tu stretch occupies residues Thr-80–Val-83.

It belongs to the EF-Ts family.

The protein localises to the cytoplasm. Functionally, associates with the EF-Tu.GDP complex and induces the exchange of GDP to GTP. It remains bound to the aminoacyl-tRNA.EF-Tu.GTP complex up to the GTP hydrolysis stage on the ribosome. The polypeptide is Elongation factor Ts (Alkaliphilus metalliredigens (strain QYMF)).